The following is a 386-amino-acid chain: Lycopene beta-cyclase (386 aa).

NAD(+) is bound at residue Asp4–Asp34.

It belongs to the lycopene cyclase family. The cofactor is FAD.

The enzyme catalyses a carotenoid psi-end group = a carotenoid beta-end derivative. It catalyses the reaction all-trans-lycopene = gamma-carotene. It carries out the reaction gamma-carotene = all-trans-beta-carotene. It participates in carotenoid biosynthesis; astaxanthin biosynthesis. Catalyzes the double cyclization reaction which converts lycopene to beta-carotene. In Paracoccus sp. (strain N81106 / MBIC 01143) (Agrobacterium aurantiacum), this protein is Lycopene beta-cyclase.